We begin with the raw amino-acid sequence, 418 residues long: Serine hydroxymethyltransferase (418 aa).

(6S)-5,6,7,8-tetrahydrofolate-binding positions include Leu121 and 125–127 (GHL). Lys230 is subject to N6-(pyridoxal phosphate)lysine. 355–357 (SPF) is a (6S)-5,6,7,8-tetrahydrofolate binding site.

The protein belongs to the SHMT family. Homodimer. It depends on pyridoxal 5'-phosphate as a cofactor.

It localises to the cytoplasm. The catalysed reaction is (6R)-5,10-methylene-5,6,7,8-tetrahydrofolate + glycine + H2O = (6S)-5,6,7,8-tetrahydrofolate + L-serine. Its pathway is one-carbon metabolism; tetrahydrofolate interconversion. It functions in the pathway amino-acid biosynthesis; glycine biosynthesis; glycine from L-serine: step 1/1. Its function is as follows. Catalyzes the reversible interconversion of serine and glycine with tetrahydrofolate (THF) serving as the one-carbon carrier. This reaction serves as the major source of one-carbon groups required for the biosynthesis of purines, thymidylate, methionine, and other important biomolecules. Also exhibits THF-independent aldolase activity toward beta-hydroxyamino acids, producing glycine and aldehydes, via a retro-aldol mechanism. In Alcanivorax borkumensis (strain ATCC 700651 / DSM 11573 / NCIMB 13689 / SK2), this protein is Serine hydroxymethyltransferase.